We begin with the raw amino-acid sequence, 118 residues long: Ribonuclease P protein component (118 aa).

Belongs to the RnpA family. Consists of a catalytic RNA component (M1 or rnpB) and a protein subunit.

It catalyses the reaction Endonucleolytic cleavage of RNA, removing 5'-extranucleotides from tRNA precursor.. Its function is as follows. RNaseP catalyzes the removal of the 5'-leader sequence from pre-tRNA to produce the mature 5'-terminus. It can also cleave other RNA substrates such as 4.5S RNA. The protein component plays an auxiliary but essential role in vivo by binding to the 5'-leader sequence and broadening the substrate specificity of the ribozyme. The polypeptide is Ribonuclease P protein component (Shewanella amazonensis (strain ATCC BAA-1098 / SB2B)).